Consider the following 316-residue polypeptide: tRNA dimethylallyltransferase (316 aa).

17 to 24 is an ATP binding site; sequence GPTASGKT. 19 to 24 is a binding site for substrate; sequence TASGKT. 4 interaction with substrate tRNA regions span residues 42-45, 166-170, 247-252, and 280-287; these read DSAL, QRLSR, RCVGYR, and KRQITWLR.

It belongs to the IPP transferase family. Monomer. Mg(2+) serves as cofactor.

The enzyme catalyses adenosine(37) in tRNA + dimethylallyl diphosphate = N(6)-dimethylallyladenosine(37) in tRNA + diphosphate. Catalyzes the transfer of a dimethylallyl group onto the adenine at position 37 in tRNAs that read codons beginning with uridine, leading to the formation of N6-(dimethylallyl)adenosine (i(6)A). This is tRNA dimethylallyltransferase from Shigella boydii serotype 18 (strain CDC 3083-94 / BS512).